The following is a 21-amino-acid chain: 20 kDa chaperonin, chloroplastic (21 aa).

Belongs to the GroES chaperonin family. Forms stable complexes with CPN60 in the presence of ATP.

It localises to the plastid. It is found in the chloroplast. Seems to function only as a co-chaperone, along with cpn60, and in certain cases is essential for the discharge of biologically active proteins from cpn60. This chain is 20 kDa chaperonin, chloroplastic (CPN21), found in Pisum sativum (Garden pea).